The chain runs to 325 residues: Intelectin (325 aa).

The N-terminal stretch at 1–23 is a signal peptide; it reads MKYCVLLIMIHLLLVELPQFPEA. In terms of domain architecture, Fibrinogen C-terminal spans 44 to 266; the sequence is IRSSYIGRSC…AAMAICSGVK (223 aa). The cysteines at positions 53 and 82 are disulfide-linked. Ca(2+)-binding residues include histidine 98, glutamate 99, asparagine 101, glycine 104, glycine 109, aspartate 110, aspartate 145, glutamate 274, glutamate 286, and aspartate 294. Cystine bridges form between cysteine 106/cysteine 292 and cysteine 262/cysteine 277. A carbohydrate is bound by residues 274–275 and glutamate 286; that span reads EH.

Expressed at high levels in caudal kidney, liver, and swim bladder. Also expressed in gill, spleen, intestine and head kidney. Not detected in heart.

May be involved in innate immune surveillance. May specifically recognize carbohydrate chains of pathogens and bacterial components in a calcium-dependent manner. In vitro binds N-acetylglucosamine residues. The chain is Intelectin from Oncorhynchus mykiss (Rainbow trout).